The sequence spans 126 residues: Holo-[acyl-carrier-protein] synthase (126 aa).

Residues D8 and E59 each coordinate Mg(2+).

Belongs to the P-Pant transferase superfamily. AcpS family. Mg(2+) serves as cofactor.

The protein resides in the cytoplasm. It catalyses the reaction apo-[ACP] + CoA = holo-[ACP] + adenosine 3',5'-bisphosphate + H(+). Functionally, transfers the 4'-phosphopantetheine moiety from coenzyme A to a Ser of acyl-carrier-protein. The protein is Holo-[acyl-carrier-protein] synthase of Rickettsia akari (strain Hartford).